A 302-amino-acid polypeptide reads, in one-letter code: NAD kinase 2 (302 aa).

Asp78 functions as the Proton acceptor in the catalytic mechanism. NAD(+) contacts are provided by residues 78–79, 152–153, Asp182, 193–198, and Ala217; these read DG, NE, and TAYALS.

Belongs to the NAD kinase family. Requires a divalent metal cation as cofactor.

It is found in the cytoplasm. The catalysed reaction is NAD(+) + ATP = ADP + NADP(+) + H(+). Its function is as follows. Involved in the regulation of the intracellular balance of NAD and NADP, and is a key enzyme in the biosynthesis of NADP. Catalyzes specifically the phosphorylation on 2'-hydroxyl of the adenosine moiety of NAD to yield NADP. This Parasynechococcus marenigrum (strain WH8102) protein is NAD kinase 2.